Here is a 167-residue protein sequence, read N- to C-terminus: Transmembrane protein 220 (167 aa).

A run of 5 helical transmembrane segments spans residues 10–30 (PGLWRACNALMAAFFALAAVV), 40–60 (WVVVYMIPAVLTLLVGFNPLV), 69–89 (VSAIHMLFCALWAGGLAYHFL), 104–122 (ELSGLVIVTAWMALCHSSS), and 130–150 (MHLAIAVVITLLPLLSWVYVH).

It is found in the membrane. The protein is Transmembrane protein 220 (Tmem220) of Mus musculus (Mouse).